The chain runs to 172 residues: MLPDKTALPIITLSQPTAEVGAQVHRLISKCPPLDPNSMYCNLLQSSHFSETAVAAKIGDELVGFVSGYRIPQRPDTLFVWQVAVGEKARGQGLATRMLKAILARPVNQDINRIETTITPNNKASWALFEGLAKKLDTQIGSAVMFDKTRHFADQHETEMLVKVGPFKAVQA.

Positions 11–165 (ITLSQPTAEV…HETEMLVKVG (155 aa)) constitute an N-acetyltransferase domain.

This sequence belongs to the acetyltransferase family. EctA subfamily. In terms of assembly, homodimer.

It carries out the reaction L-2,4-diaminobutanoate + acetyl-CoA = (2S)-4-acetamido-2-aminobutanoate + CoA + H(+). It participates in amine and polyamine biosynthesis; ectoine biosynthesis; L-ectoine from L-aspartate 4-semialdehyde: step 2/3. Inhibited by zinc and cadmium. In terms of biological role, catalyzes the acetylation of L-2,4-diaminobutyrate (DABA) to gamma-N-acetyl-alpha,gamma-diaminobutyric acid (ADABA) with acetyl coenzyme A. This Methylotuvimicrobium alcaliphilum (strain DSM 19304 / NCIMB 14124 / VKM B-2133 / 20Z) (Methylomicrobium alcaliphilum) protein is L-2,4-diaminobutyric acid acetyltransferase (ectA).